A 173-amino-acid chain; its full sequence is Small ribosomal subunit protein uS9 (173 aa).

Residues 1–15 show a composition bias toward polar residues; the sequence is MTDTPTENLENTEVT. Disordered stretches follow at residues 1-26 and 135-173; these read MTDTPTENLENTEVTPFTEGDREIAY and EASRPALKKAGMLTRDARVKERKKAGLKKARKAPQYSKR. A compositionally biased stretch (basic residues) spans 154–173; the sequence is KERKKAGLKKARKAPQYSKR.

This sequence belongs to the universal ribosomal protein uS9 family.

This is Small ribosomal subunit protein uS9 from Cutibacterium acnes (strain DSM 16379 / KPA171202) (Propionibacterium acnes).